The following is a 250-amino-acid chain: MTVDPIHQFEIQRYVELLRVSGVTVSFTNSAAFMVGIVALIFFFLTYATRGRTLVPGRMQSVAEMGYEFIAKMVRESAGTEGMVFFPLVFSLFVFVFVANVIGLVPYTFTITAHIVVTAALALLVIGTVVIYGFYKHGTHFLHLFVPSGVPAFLLPFIVLIEVISFLSRPISLSLRLFANMLAGHIALKVFAFFVVGLGSAGFLGWLGATLPFFMIVALTALELLVAILQAYVFAVLTSIYLNDAVHPGH.

6 helical membrane-spanning segments follow: residues Val-25 to Leu-45, Val-84 to Leu-104, Ile-115 to Tyr-135, Phe-141 to Ile-161, Ala-187 to Ala-209, and Glu-223 to Asn-243.

This sequence belongs to the ATPase A chain family. F-type ATPases have 2 components, CF(1) - the catalytic core - and CF(0) - the membrane proton channel. CF(1) has five subunits: alpha(3), beta(3), gamma(1), delta(1), epsilon(1). CF(0) has three main subunits: a(1), b(2) and c(9-12). The alpha and beta chains form an alternating ring which encloses part of the gamma chain. CF(1) is attached to CF(0) by a central stalk formed by the gamma and epsilon chains, while a peripheral stalk is formed by the delta and b chains.

It is found in the cell inner membrane. Its function is as follows. Key component of the proton channel; it plays a direct role in the translocation of protons across the membrane. The protein is ATP synthase subunit a of Azorhizobium caulinodans (strain ATCC 43989 / DSM 5975 / JCM 20966 / LMG 6465 / NBRC 14845 / NCIMB 13405 / ORS 571).